A 388-amino-acid polypeptide reads, in one-letter code: Probable proton-coupled zinc antiporter SLC30A3 (388 aa).

The disordered stretch occupies residues 1–46 (MEPSPAAGGLETTRLVSPRDRGGAGGSLRLKSLFTEPSEPLPEESK). Residues 1–75 (MEPSPAAGGL…TPERLHARRQ (75 aa)) are Cytoplasmic-facing. Residues 76 to 96 (LYAACAVCFVFMAGEVVGGYL) form a helical membrane-spanning segment. Over 97–105 (AHSLAIMTD) the chain is Lumenal. A helical membrane pass occupies residues 106 to 126 (AAHLLADVGSMMGSLFSLWLS). Positions 108 and 112 each coordinate Zn(2+). Over 127–145 (TRPATRTMTFGWHRSETLG) the chain is Cytoplasmic. The helical transmembrane segment at 146–166 (ALASVVSLWMVTGILLYLAFV) threads the bilayer. At 167–177 (RLLHSDYHIEG) the chain is on the lumenal side. Residues 178 to 198 (GAMLLTASIAVCANLLMAFVL) form a helical membrane-spanning segment. The Cytoplasmic segment spans residues 199 to 235 (HQAGPPHSHGSRGAEYAPLEEGPEEPLPLGNTSVRAA). A helical membrane pass occupies residues 236-256 (FVHVLGDLLQSFGVLAASILI). Residues His-238 and Asp-242 each contribute to the Zn(2+) site. At 257 to 264 (YFKPQYKA) the chain is on the lumenal side. The chain crosses the membrane as a helical span at residues 265 to 285 (ADPISTFLFSICALGSTAPTL). At 286 to 388 (RDVLRILMEG…CLRCQEPPQA (103 aa)) the chain is on the cytoplasmic side. Tyr-357 participates in a covalent cross-link: Dityrosine (Tyr-Tyr) (interchain with Y-372). Residue Tyr-372 forms a Dityrosine (Tyr-Tyr) (interchain with Y-357) linkage.

Belongs to the cation diffusion facilitator (CDF) transporter (TC 2.A.4) family. SLC30A subfamily. As to quaternary structure, homodimer; dityrosine-linked. Homodimerization seems specific of the human protein and enhances the zinc transport efficiency. Interacts with TMEM163. In terms of processing, homodimerization through dityrosine bonds is stimulated by oxidative stress.

Its subcellular location is the cytoplasmic vesicle. It is found in the secretory vesicle. The protein localises to the synaptic vesicle membrane. It localises to the synapse. The protein resides in the synaptosome. Its subcellular location is the late endosome membrane. It is found in the lysosome membrane. It catalyses the reaction Zn(2+)(in) + 2 H(+)(out) = Zn(2+)(out) + 2 H(+)(in). Functionally, probable proton-coupled zinc ion antiporter mediating the import of zinc from cytoplasm into synaptic vesicles and participating to cellular zinc ion homeostasis in the brain. The polypeptide is Probable proton-coupled zinc antiporter SLC30A3 (Homo sapiens (Human)).